We begin with the raw amino-acid sequence, 346 residues long: Insertion element IS476 uncharacterized 39.2 kDa protein (346 aa).

The tract at residues 1 to 50 (MVSARPAFISGGPSTGGWRPTRQAAERTGGPEHSIEEVAGRGAPGHRSAE) is disordered. Over residues 29–39 (GGPEHSIEEVA) the composition is skewed to basic and acidic residues. In terms of domain architecture, Integrase catalytic spans 169–329 (ASSMPNDTWS…IPPAQFAANY (161 aa)).

The sequence is that of Insertion element IS476 uncharacterized 39.2 kDa protein from Xanthomonas euvesicatoria.